Reading from the N-terminus, the 546-residue chain is Type II methyltransferase M.XhoI (546 aa).

Belongs to the N(4)/N(6)-methyltransferase family.

The catalysed reaction is a 2'-deoxyadenosine in DNA + S-adenosyl-L-methionine = an N(6)-methyl-2'-deoxyadenosine in DNA + S-adenosyl-L-homocysteine + H(+). Its function is as follows. A gamma subtype methylase, recognizes the double-stranded sequence 5'-CTCGAG-3', methylates A-5 on both strands, and protects the DNA from cleavage by the XhoI endonuclease. This Xanthomonas vasicola protein is Type II methyltransferase M.XhoI.